The following is a 316-amino-acid chain: 4-hydroxyphenylacetate decarboxylase activating enzyme (316 aa).

The Radical SAM core domain occupies histidine 20–alanine 307. 7 residues coordinate [4Fe-4S] cluster: cysteine 34, cysteine 38, cysteine 41, cysteine 60, cysteine 66, cysteine 69, and cysteine 105. S-adenosyl-L-methionine is bound at residue tryptophan 40–alanine 42. One can recognise a 4Fe-4S ferredoxin-type domain in the interval asparagine 84–lysine 115. S-adenosyl-L-methionine is bound by residues glycine 144, aspartate 193–lysine 195, and histidine 267.

It belongs to the organic radical-activating enzymes family. As to quaternary structure, monomer. It depends on [4Fe-4S] cluster as a cofactor.

The catalysed reaction is glycyl-[protein] + reduced [flavodoxin] + S-adenosyl-L-methionine = glycin-2-yl radical-[protein] + semiquinone [flavodoxin] + 5'-deoxyadenosine + L-methionine + H(+). Functionally, catalyzes activation of 4-hydroxyphenylacetate decarboxylase under anaerobic conditions by generation of an organic free radical on a glycine residue, via a homolytic cleavage of S-adenosyl-L-methionine (SAM). The chain is 4-hydroxyphenylacetate decarboxylase activating enzyme from Clostridioides difficile (strain CD196) (Peptoclostridium difficile).